Here is a 238-residue protein sequence, read N- to C-terminus: Lipid transferase CIDEC (238 aa).

The required for liquid-liquid phase separation (LLPS) stretch occupies residues 1–35; the sequence is MDYAMKSLSLLYPRSLSRHVAVSTAVVTQQLVSEP. The CIDE-N domain occupies 41–118; that stretch reads RARPCRVSTA…VLQKGQKWKS (78 aa).

This sequence belongs to the CIDE family. Homodimer. Interacts with CIDEA. Homooligomer; undergoes liquid-liquid phase separation (LLPS) via its N-terminus, facilitating lipid droplet fusion, occurs at the lipid droplet contact sites. Interacts with PLIN1. Interacts with NFAT5; this interaction is direct and retains NFAT5 in the cytoplasm. Interacts with CEBPB. Interacts with isoform CLSTN3beta of CLSTN3; inhibiting the lipid transferase activity of CIDEC. In terms of processing, ubiquitinated and targeted to proteasomal degradation, resulting in a short half-life (about 15 minutes in 3T3-L1 cells). Protein stability depends on triaclyglycerol synthesis, fatty acid availability and lipid droplet formation.

It is found in the lipid droplet. Its subcellular location is the endoplasmic reticulum. It localises to the nucleus. It catalyses the reaction a triacyl-sn-glycerol(in) = a triacyl-sn-glycerol(out). Lipid transferase specifically expressed in white adipose tissue, which promotes unilocular lipid droplet formation by mediating lipid droplet fusion. Lipid droplet fusion promotes their enlargement, restricting lipolysis and favoring lipid storage. Localizes on the lipid droplet surface, at focal contact sites between lipid droplets, and mediates atypical lipid droplet fusion by undergoing liquid-liquid phase separation (LLPS) and promoting directional net neutral lipid transfer from the smaller to larger lipid droplets. The transfer direction may be driven by the internal pressure difference between the contacting lipid droplet pair. Its role in neutral lipid transfer and lipid droplet enlargement is activated by the interaction with PLIN1. May also act as a CEBPB coactivator in the white adipose tissue to control the expression of a subset of CEBPB downstream target genes, including SOCS1, SOCS3, TGFB1, TGFBR1, ID2 and XDH. When overexpressed in preadipocytes, induces apoptosis or increases cell susceptibility to apoptosis induced by serum deprivation or TGFB treatment. This is Lipid transferase CIDEC from Rattus norvegicus (Rat).